Here is a 41-residue protein sequence, read N- to C-terminus: MSDDNAAKIIFKKKSTGKIVGEMKATSLAADTILQNDNKSK.

The chain is SPbeta prophage-derived uncharacterized protein YosF (yosF) from Bacillus subtilis (strain 168).